The following is a 679-amino-acid chain: Stress-70 protein, mitochondrial (679 aa).

Residues 1–46 (MISASRAAVSRFVGTAASRGPTAARHQDGWNGLSHEAFRIVSRRDY) constitute a mitochondrion transit peptide. The interval 1–432 (MISASRAAVS…IQGGVLAGDV (432 aa)) is interaction with NFS1. Thr63 and Asn64 together coordinate ADP. Residues 63 to 431 (TNSCVAVMEG…AIQGGVLAGD (369 aa)) are nucleotide-binding domain (NBD). The residue at position 76 (Lys76) is an N6-acetyllysine. Thr87 is subject to Phosphothreonine. N6-acetyllysine; alternate is present on residues Lys135 and Lys138. Lys135 and Lys138 each carry N6-succinyllysine; alternate. Position 143 is an N6-acetyllysine (Lys143). At Lys206 the chain carries N6-acetyllysine; alternate. An N6-succinyllysine; alternate modification is found at Lys206. Residue Lys206 is modified to N6-malonyllysine; alternate. Lys234 and Lys288 each carry N6-acetyllysine. Lys300 carries the N6-acetyllysine; alternate modification. Lys300 is modified (N6-succinyllysine; alternate). Positions 313, 316, and 320 each coordinate ADP. Lys368 carries the post-translational modification N6-succinyllysine. Gly388 and Arg391 together coordinate ADP. Lys394 bears the N6-succinyllysine mark. A Phosphoserine modification is found at Ser408. Positions 432–441 (VTDVLLLDVT) are interdomain linker. The interval 432–679 (VTDVLLLDVT…QKDNQKEEKQ (248 aa)) is interaction with FXN and ISCU. A substrate-binding domain (SBD) region spans residues 442-679 (PLSLGIETLG…QKDNQKEEKQ (238 aa)). The residue at position 513 (Arg513) is an Omega-N-methylarginine. N6-acetyllysine; alternate occurs at positions 567 and 600. N6-succinyllysine; alternate is present on residues Lys567 and Lys600. Lys610 carries the post-translational modification N6-succinyllysine. N6-acetyllysine is present on Lys612. The residue at position 646 (Lys646) is an N6-acetyllysine; alternate. At Lys646 the chain carries N6-succinyllysine; alternate. Positions 656-679 (ASEREGSGSSGTGEQKDNQKEEKQ) are disordered. Positions 669–679 (EQKDNQKEEKQ) are enriched in basic and acidic residues.

It belongs to the heat shock protein 70 family. In terms of assembly, interacts strongly with the intermediate form of FXN and weakly with its mature form. Interacts with HSCB. Associates with the mitochondrial contact site and cristae organizing system (MICOS) complex, composed of at least MICOS10/MIC10, CHCHD3/MIC19, CHCHD6/MIC25, APOOL/MIC27, IMMT/MIC60, APOO/MIC23/MIC26 and QIL1/MIC13. This complex was also known under the names MINOS or MitOS complex. The MICOS complex associates with mitochondrial outer membrane proteins SAMM50, MTX1, MTX2 and DNAJC11, mitochondrial inner membrane protein TMEM11 and with HSPA9. Interacts with DNLZ, the interaction is required to prevent self-aggregation. Interacts with TESPA1. Interacts with PDPN. Interacts with NFU1, NFS1 and ISCU. Interacts with TP53; the interaction promotes TP53 degradation. Interacts (via SBD domain) with UBXN2A; the interaction with UBXN2A inhibits HSPA9/MOT-2 interaction with and degradation of TP53, thereby promotes TP53 translocation to the nucleus. Interacts with ITPR1 AND VDAC1; this interaction couples ITPR1 to VDAC1. Component of the TIM23 mitochondrial inner membrane pre-sequence translocase complex.

The protein resides in the mitochondrion. It is found in the nucleus. Its subcellular location is the nucleolus. The protein localises to the cytoplasm. It localises to the mitochondrion matrix. It catalyses the reaction ATP + H2O = ADP + phosphate + H(+). Its activity is regulated as follows. The chaperone activity is regulated by ATP-induced allosteric coupling of the nucleotide-binding (NBD) and substrate-binding (SBD) domains. ATP binding in the NBD leads to a conformational change in the NBD, which is transferred through the interdomain linker (IDL) to the substrate-binding domain (SBD). This elicits a reduced substrate affinity and a faster substrate exchange rate. Upon hydrolysis of ATP to ADP, the protein undergoes a conformational change that increases its affinity for substrate proteins. It cycles through repeated phases of ATP hydrolysis and nucleotide exchange, facilitating repeated cycles of substrate binding and release. Functions in collaboration with co-chaperones. Functions with the co-chaperone, DNLZ, to maintain solubility and regulate ATP hydrolysis. Nucleotide exchange factors, GRPEL1 and GRPEL2, accelerate nucleotide exchange. In terms of biological role, mitochondrial chaperone that plays a key role in mitochondrial protein import, folding, and assembly. Plays an essential role in the protein quality control system, the correct folding of proteins, the re-folding of misfolded proteins, and the targeting of proteins for subsequent degradation. These processes are achieved through cycles of ATP binding, ATP hydrolysis, and ADP release, mediated by co-chaperones. In mitochondria, it associates with the TIM (translocase of the inner membrane) protein complex to assist in the import and folding of mitochondrial proteins. Plays an important role in mitochondrial iron-sulfur cluster (ISC) biogenesis, interacts with and stabilizes ISC cluster assembly proteins FXN, NFU1, NFS1 and ISCU. Regulates erythropoiesis via stabilization of ISC assembly. Regulates mitochondrial calcium-dependent apoptosis by coupling two calcium channels, ITPR1 and VDAC1, at the mitochondria-associated endoplasmic reticulum (ER) membrane to facilitate calcium transport from the ER lumen to the mitochondria intermembrane space, providing calcium for the downstream calcium channel MCU, which releases it into the mitochondrial matrix. Although primarily located in the mitochondria, it is also found in other cellular compartments. In the cytosol, it associates with proteins involved in signaling, apoptosis, or senescence. It may play a role in cell cycle regulation via its interaction with and promotion of degradation of TP53. May play a role in the control of cell proliferation and cellular aging. Protects against reactive oxygen species (ROS). Extracellular HSPA9 plays a cytoprotective role by preventing cell lysis following immune attack by the membrane attack complex by disrupting formation of the complex. The polypeptide is Stress-70 protein, mitochondrial (Bos taurus (Bovine)).